A 73-amino-acid polypeptide reads, in one-letter code: Large ribosomal subunit protein bL31 (73 aa).

This sequence belongs to the bacterial ribosomal protein bL31 family. Type A subfamily. As to quaternary structure, part of the 50S ribosomal subunit.

Binds the 23S rRNA. In Bartonella bacilliformis (strain ATCC 35685 / KC583 / Herrer 020/F12,63), this protein is Large ribosomal subunit protein bL31.